We begin with the raw amino-acid sequence, 22 residues long: Major outer membrane protein (22 aa).

It belongs to the Gram-negative porin family. As to quaternary structure, disulfide bond interactions within and between MOMP molecules and other components form high molecular-weight oligomers.

Its subcellular location is the cell outer membrane. Functionally, structural rigidity of the outer membrane of elementary bodies and porin forming, permitting diffusion of solutes through the intracellular reticulate body membrane. This Avibacterium gallinarum (Pasteurella gallinarum) protein is Major outer membrane protein (ompH).